We begin with the raw amino-acid sequence, 239 residues long: tRNA (guanine-N(7)-)-methyltransferase (239 aa).

Residues E69, E94, D121, and D144 each contribute to the S-adenosyl-L-methionine site. The active site involves D144. K148 provides a ligand contact to substrate. The interval 150–155 is interaction with RNA; it reads RHNKRR. Substrate-binding positions include D180 and 217 to 220; that span reads TKFE.

Belongs to the class I-like SAM-binding methyltransferase superfamily. TrmB family. In terms of assembly, monomer.

It catalyses the reaction guanosine(46) in tRNA + S-adenosyl-L-methionine = N(7)-methylguanosine(46) in tRNA + S-adenosyl-L-homocysteine. It functions in the pathway tRNA modification; N(7)-methylguanine-tRNA biosynthesis. Functionally, catalyzes the formation of N(7)-methylguanine at position 46 (m7G46) in tRNA. This is tRNA (guanine-N(7)-)-methyltransferase from Klebsiella pneumoniae subsp. pneumoniae (strain ATCC 700721 / MGH 78578).